We begin with the raw amino-acid sequence, 234 residues long: O-antigen biosynthesis glycosyltransferase WbnI (234 aa).

Residues 8–13 (ICTGEY), 93–95 (NAV), and 115–118 (HPGY) contribute to the substrate site. Glutamate 185 serves as the catalytic Nucleophile.

This sequence belongs to the glycosyltransferase 6 family. Mn(2+) serves as cofactor.

It catalyses the reaction alpha-L-Fuc-(1-&gt;2)-beta-D-Gal-(1-&gt;3)-alpha-D-GalNAc-(1-&gt;3)-alpha-D-GalNAc-di-trans,octa-cis-undecaprenyl diphosphate + UDP-alpha-D-galactose = alpha-L-Fuc-(1-&gt;2)-[alpha-D-Gal-(1-&gt;3)]-beta-D-Gal-(1-&gt;3)-alpha-D-GalNAc-(1-&gt;3)-alpha-D-GalNAc-di-trans,octa-cis-undecaprenyl diphosphate + UDP + H(+). The protein operates within bacterial outer membrane biogenesis; LPS O-antigen biosynthesis. In terms of biological role, involved in the assembly of the O-repeating unit during O-antigen biosynthesis. The sequence is that of O-antigen biosynthesis glycosyltransferase WbnI from Escherichia coli.